The sequence spans 90 residues: Acylphosphatase (90 aa).

Residues 3–89 (ALKIRVEGIV…EGYEDFTIKY (87 aa)) form the Acylphosphatase-like domain. Active-site residues include Arg18 and Asn36.

The protein belongs to the acylphosphatase family.

It catalyses the reaction an acyl phosphate + H2O = a carboxylate + phosphate + H(+). This Thermotoga maritima (strain ATCC 43589 / DSM 3109 / JCM 10099 / NBRC 100826 / MSB8) protein is Acylphosphatase (acyP).